Reading from the N-terminus, the 341-residue chain is uncharacterized protein (341 aa).

Residues 315–337 (VAAWFSGIAGGTFLALKLVSLMM) traverse the membrane as a helical segment.

The protein localises to the cell membrane. This is an uncharacterized protein from Bacillus subtilis (strain 168).